A 331-amino-acid polypeptide reads, in one-letter code: Gem-associated protein 2 (331 aa).

Disordered regions lie at residues 1-23 (MDEFQSKAFEVGEEIEPDDNEPL), 101-130 (SNRPSNNNNNNNNNNNNNNNNNNNNNLIPQ), and 151-222 (NNNN…TKKP). A compositionally biased stretch (acidic residues) spans 11–21 (VGEEIEPDDNE). Residues 106–126 (NNNNNNNNNNNNNNNNNNNNN) show a composition bias toward low complexity. Residues 165-215 (DNQEDDDDDENNEDYEYNENKEEEEEEEEEEEEEEEVEEEEEEEEEEEEVV) show a composition bias toward acidic residues. A coiled-coil region spans residues 173 to 224 (DENNEDYEYNENKEEEEEEEEEEEEEEEVEEEEEEEEEEEEVVDYSTKKPTL).

This sequence belongs to the gemin-2 family.

It localises to the nucleus. Its subcellular location is the gem. The protein resides in the cytoplasm. Functionally, the SMN complex catalyzes the assembly of small nuclear ribonucleoproteins (snRNPs), the building blocks of the spliceosome, and thereby plays an important role in the splicing of cellular pre-mRNAs. Most spliceosomal snRNPs contain a common set of Sm proteins SNRPB, SNRPD1, SNRPD2, SNRPD3, SNRPE, SNRPF and SNRPG that assemble in a heptameric protein ring on the Sm site of the small nuclear RNA to form the core snRNP (Sm core). In the cytosol, the Sm proteins SNRPD1, SNRPD2, SNRPE, SNRPF and SNRPG (5Sm) are trapped in an inactive 6S pICln-Sm complex by the chaperone CLNS1A that controls the assembly of the core snRNP. To assemble core snRNPs, the SMN complex accepts the trapped 5Sm proteins from CLNS1A. Binding of snRNA inside 5Sm ultimately triggers eviction of the SMN complex, thereby allowing binding of SNRPD3 and SNRPB to complete assembly of the core snRNP. Within the SMN complex, GEMIN2 constrains the conformation of 5Sm, thereby promoting 5Sm binding to snRNA containing the snRNP code (a nonameric Sm site and a 3'-adjacent stem-loop), thus preventing progression of assembly until a cognate substrate is bound. In terms of biological role, may play an essential role in spliceosomal snRNP assembly in the cytoplasm and may be required for pre-mRNA splicing in the nucleus. This chain is Gem-associated protein 2 (gemin2), found in Dictyostelium discoideum (Social amoeba).